The chain runs to 207 residues: Thiamine-phosphate synthase (207 aa).

4-amino-2-methyl-5-(diphosphooxymethyl)pyrimidine is bound by residues 35–39 and N67; that span reads QYRDK. 2 residues coordinate Mg(2+): D68 and D86. T105 lines the 4-amino-2-methyl-5-(diphosphooxymethyl)pyrimidine pocket. 132–134 contacts 2-[(2R,5Z)-2-carboxy-4-methylthiazol-5(2H)-ylidene]ethyl phosphate; it reads SVT. K135 lines the 4-amino-2-methyl-5-(diphosphooxymethyl)pyrimidine pocket. G162 lines the 2-[(2R,5Z)-2-carboxy-4-methylthiazol-5(2H)-ylidene]ethyl phosphate pocket.

This sequence belongs to the thiamine-phosphate synthase family. It depends on Mg(2+) as a cofactor.

The catalysed reaction is 2-[(2R,5Z)-2-carboxy-4-methylthiazol-5(2H)-ylidene]ethyl phosphate + 4-amino-2-methyl-5-(diphosphooxymethyl)pyrimidine + 2 H(+) = thiamine phosphate + CO2 + diphosphate. It catalyses the reaction 2-(2-carboxy-4-methylthiazol-5-yl)ethyl phosphate + 4-amino-2-methyl-5-(diphosphooxymethyl)pyrimidine + 2 H(+) = thiamine phosphate + CO2 + diphosphate. The enzyme catalyses 4-methyl-5-(2-phosphooxyethyl)-thiazole + 4-amino-2-methyl-5-(diphosphooxymethyl)pyrimidine + H(+) = thiamine phosphate + diphosphate. It participates in cofactor biosynthesis; thiamine diphosphate biosynthesis; thiamine phosphate from 4-amino-2-methyl-5-diphosphomethylpyrimidine and 4-methyl-5-(2-phosphoethyl)-thiazole: step 1/1. In terms of biological role, condenses 4-methyl-5-(beta-hydroxyethyl)thiazole monophosphate (THZ-P) and 2-methyl-4-amino-5-hydroxymethyl pyrimidine pyrophosphate (HMP-PP) to form thiamine monophosphate (TMP). The polypeptide is Thiamine-phosphate synthase (Pseudomonas putida (strain ATCC 47054 / DSM 6125 / CFBP 8728 / NCIMB 11950 / KT2440)).